Reading from the N-terminus, the 112-residue chain is Probable fatty acid-binding protein (112 aa).

Belongs to the calycin superfamily. Fatty-acid binding protein (FABP) family.

This chain is Probable fatty acid-binding protein, found in Anopheles gambiae (African malaria mosquito).